Reading from the N-terminus, the 154-residue chain is Endoribonuclease YbeY (154 aa).

The Zn(2+) site is built by histidine 113, histidine 117, and histidine 123.

Belongs to the endoribonuclease YbeY family. Zn(2+) is required as a cofactor.

Its subcellular location is the cytoplasm. Functionally, single strand-specific metallo-endoribonuclease involved in late-stage 70S ribosome quality control and in maturation of the 3' terminus of the 16S rRNA. The protein is Endoribonuclease YbeY of Vibrio vulnificus (strain YJ016).